Reading from the N-terminus, the 417-residue chain is Gap junction alpha-3 protein (417 aa).

The stretch at 2 to 15 (GDWSFLGRLLENAQ) is an intramembrane region. The Cytoplasmic segment spans residues 16-19 (EHST). The helical transmembrane segment at 20-40 (VIGKVWLTVLFIFRILVLGAA) threads the bilayer. Residues 41–71 (AEEVWGDEQSDFTCNTQQPGCENVCYDRAFP) lie on the Extracellular side of the membrane. Disulfide bonds link cysteine 54-cysteine 198, cysteine 61-cysteine 192, and cysteine 65-cysteine 187. Residues 72 to 92 (ISHIRFWALQIIFVSTPTLIY) form a helical membrane-spanning segment. Residues 93–158 (LGHVLHIVRM…GALLRTYVFN (66 aa)) are Cytoplasmic-facing. Residues 110–128 (EEELLRRDNPQHGRGREPM) show a composition bias toward basic and acidic residues. The segment at 110–141 (EEELLRRDNPQHGRGREPMRTGSPRDPPLRDD) is disordered. Residues 159–179 (IIFKTLFEVGFIAGQYFLYGF) traverse the membrane as a helical segment. Over 180–207 (QLQPLYRCDRWPCPNTVDCFISRPTEKT) the chain is Extracellular. Residues 208 to 228 (IFVIFMLAVACASLVLNMLEI) form a helical membrane-spanning segment. Residues 229-417 (YHLGWKKLKQ…GRARPGDLAI (189 aa)) are Cytoplasmic-facing. Disordered stretches follow at residues 247 to 267 (DASEARHKPLDPLPTATSSGP) and 334 to 417 (RQVA…DLAI). A compositionally biased stretch (low complexity) spans 342–353 (PASKPSSAASSP).

The protein belongs to the connexin family. Alpha-type (group II) subfamily. A hemichannel or connexon is composed of a hexamer of connexins. A functional gap junction is formed by the apposition of two hemichannels. Forms heteromeric channels with GJA8.

It is found in the cell membrane. The protein localises to the cell junction. The protein resides in the gap junction. Structural component of lens fiber gap junctions. Gap junctions are dodecameric channels that connect the cytoplasm of adjoining cells. They are formed by the docking of two hexameric hemichannels, one from each cell membrane. Small molecules and ions diffuse from one cell to a neighboring cell via the central pore. The sequence is that of Gap junction alpha-3 protein (Gja3) from Mus musculus (Mouse).